The sequence spans 480 residues: Zinc metalloproteinase/disintegrin (480 aa).

The first 20 residues, 1–20, serve as a signal peptide directing secretion; it reads MIQVLLITICLAVFPFQGSS. The propeptide occupies 21–190; it reads IVLDSGNLNE…KASQLNVSPD (170 aa). In terms of domain architecture, Peptidase M12B spans 197–391; the sequence is RFIKLAIYVD…HSPQCILNDP (195 aa). 2 N-linked (GlcNAc...) asparagine glycosylation sites follow: Asn259 and Asn279. 9 disulfides stabilise this stretch: Cys308–Cys386, Cys348–Cys370, Cys350–Cys353, Cys413–Cys428, Cys415–Cys423, Cys422–Cys445, Cys436–Cys442, Cys441–Cys466, and Cys454–Cys473. A Zn(2+)-binding site is contributed by His333. Glu334 is a catalytic residue. Zn(2+) contacts are provided by His337 and His343. One can recognise a Disintegrin domain in the interval 399–480; it reads TPVSGNELLE…AGCPRNPFHA (82 aa). The short motif at 458–460 is the Cell attachment site element; it reads RGD.

The protein belongs to the venom metalloproteinase (M12B) family. P-II subfamily. P-IIa sub-subfamily. In terms of assembly, monomer. It depends on Zn(2+) as a cofactor. As to expression, expressed by the venom gland.

It is found in the secreted. Functionally, impairs hemostasis in the envenomed animal. Inhibits platelet aggregation and bone resorption. The polypeptide is Zinc metalloproteinase/disintegrin (Gloydius halys (Chinese water mocassin)).